We begin with the raw amino-acid sequence, 307 residues long: Transmembrane and coiled-coil domain-containing protein 5B (307 aa).

Positions T20–V212 form a coiled coil. The helical transmembrane segment at Y246–V268 threads the bilayer.

Belongs to the TMCO5 family.

Its subcellular location is the membrane. The sequence is that of Transmembrane and coiled-coil domain-containing protein 5B (Tmco5b) from Mus musculus (Mouse).